The primary structure comprises 228 residues: Cutinase (228 aa).

A signal peptide spans 1–16 (MKFLSIISLAVSLVAA). Cys-49 and Cys-129 form a disulfide bridge. Ser-140 (nucleophile) is an active-site residue. Cys-191 and Cys-198 are oxidised to a cystine. Asp-195 is an active-site residue. His-208 functions as the Proton donor/acceptor in the catalytic mechanism.

The protein belongs to the cutinase family. Post-translationally, the 2 disulfide bonds play a critical role in holding the catalytic residues in juxta-position; reduction of the disulfide bridges results in the complete inactivation of the enzyme.

It localises to the secreted. It carries out the reaction cutin + H2O = cutin monomers.. Its activity is regulated as follows. Partially inhibited by berberine; higher inhibitory effects are observed with longer chain polyester substrates. Catalyzes the hydrolysis of complex carboxylic polyesters found in the cell wall of plants. Degrades cutin, a macromolecule that forms the structure of the plant cuticle. Allows pathogenic fungi to penetrate through the cuticular barrier into the host plant during the initial stage of fungal infection. This Colletotrichum truncatum (Anthracnose fungus) protein is Cutinase (CUTA).